Consider the following 376-residue polypeptide: N-acetyldiaminopimelate deacetylase (376 aa).

Residue aspartate 69 is part of the active site. The Proton acceptor role is filled by glutamate 128.

Belongs to the peptidase M20A family. N-acetyldiaminopimelate deacetylase subfamily.

It catalyses the reaction N-acetyl-(2S,6S)-2,6-diaminopimelate + H2O = (2S,6S)-2,6-diaminopimelate + acetate. It functions in the pathway amino-acid biosynthesis; L-lysine biosynthesis via DAP pathway; LL-2,6-diaminopimelate from (S)-tetrahydrodipicolinate (acetylase route): step 3/3. Its function is as follows. Catalyzes the conversion of N-acetyl-diaminopimelate to diaminopimelate and acetate. The chain is N-acetyldiaminopimelate deacetylase from Bacillus cytotoxicus (strain DSM 22905 / CIP 110041 / 391-98 / NVH 391-98).